The chain runs to 588 residues: DNA mismatch repair protein MutL (588 aa).

The protein belongs to the DNA mismatch repair MutL/HexB family.

Its function is as follows. This protein is involved in the repair of mismatches in DNA. It is required for dam-dependent methyl-directed DNA mismatch repair. May act as a 'molecular matchmaker', a protein that promotes the formation of a stable complex between two or more DNA-binding proteins in an ATP-dependent manner without itself being part of a final effector complex. The chain is DNA mismatch repair protein MutL from Methanocorpusculum labreanum (strain ATCC 43576 / DSM 4855 / Z).